The sequence spans 24 residues: Brevinin-1La (24 aa).

Cysteines 18 and 24 form a disulfide.

In terms of tissue distribution, expressed by the skin glands.

The protein resides in the secreted. Functionally, antibacterial activity against Gram-positive bacterium S.aureus and Gram-negative bacterium E.coli. The sequence is that of Brevinin-1La from Rana luteiventris (Columbia spotted frog).